The chain runs to 64 residues: Cold shock protein CapA (64 aa).

The region spanning 7 to 64 (GTVKWFNDEKGFGFITPQGGGDDLFVHFKAIESDGFKSLKEGQTVSFVAEKGQKGMQA) is the CSD domain.

The protein localises to the cytoplasm. Affects cell viability at low temperatures. In Pseudomonas fragi, this protein is Cold shock protein CapA (capA).